We begin with the raw amino-acid sequence, 178 residues long: Deoxycytidylate deaminase (178 aa).

A CMP/dCMP-type deaminase domain is found at Glu14–Phe145. A Zn(2+)-binding site is contributed by His84. Catalysis depends on Glu86, which acts as the Proton donor. Zn(2+) contacts are provided by Cys110 and Cys113. Position 174 is a phosphoserine (Ser174).

This sequence belongs to the cytidine and deoxycytidylate deaminase family. As to quaternary structure, homohexamer. Zn(2+) is required as a cofactor.

It catalyses the reaction dCMP + H2O + H(+) = dUMP + NH4(+). The catalysed reaction is 5-hydroxymethyl-dCMP + H2O + H(+) = 5-hydroxymethyl-dUMP + NH4(+). Allosteric enzyme whose activity is greatly influenced by the end products of its metabolic pathway, dCTP and dTTP. In terms of biological role, catalyzes the deamination of dCMP to dUMP, providing the nucleoside monophosphate substrate for the thymidylate synthase/TYMS. Also, part of a nucleotide salvage pathway that eliminates epigenetically modified 5-hydroxymethyl-dCMP (hmdCMP) in a two-step process entailing deamination to cytotoxic 5-hydroxymethyl-dUMP (hmdUMP), followed by its hydrolysis into 5-hydroxymethyluracil (hmU) and 2-deoxy-D-ribose 5-phosphate (deoxyribosephosphate). Catalyzes the first step in that pathway, the deamination of 5-hydroxymethyl-dCMP (hmdCMP). The sequence is that of Deoxycytidylate deaminase from Homo sapiens (Human).